The chain runs to 181 residues: ATP synthase subunit b (181 aa).

The helical transmembrane segment at 12 to 32 (LPAVYDIVWSAVVFVVLLVVI) threads the bilayer.

The protein belongs to the ATPase B chain family. As to quaternary structure, F-type ATPases have 2 components, F(1) - the catalytic core - and F(0) - the membrane proton channel. F(1) has five subunits: alpha(3), beta(3), gamma(1), delta(1), epsilon(1). F(0) has three main subunits: a(1), b(2) and c(10-14). The alpha and beta chains form an alternating ring which encloses part of the gamma chain. F(1) is attached to F(0) by a central stalk formed by the gamma and epsilon chains, while a peripheral stalk is formed by the delta and b chains.

The protein localises to the cell membrane. In terms of biological role, f(1)F(0) ATP synthase produces ATP from ADP in the presence of a proton or sodium gradient. F-type ATPases consist of two structural domains, F(1) containing the extramembraneous catalytic core and F(0) containing the membrane proton channel, linked together by a central stalk and a peripheral stalk. During catalysis, ATP synthesis in the catalytic domain of F(1) is coupled via a rotary mechanism of the central stalk subunits to proton translocation. Component of the F(0) channel, it forms part of the peripheral stalk, linking F(1) to F(0). The protein is ATP synthase subunit b of Clavibacter sepedonicus (Clavibacter michiganensis subsp. sepedonicus).